The following is a 274-amino-acid chain: MQNITQSWFVQGMIKATTDAWLKGWDERNGGNLTLRLDDADIAPYKDNVHAQPRYIPLSQPMPLLANTPFIVTGSGKFFRNVQLDPAANLGVVKVDSDGAGYHILWGLTNEAVPTSELPAHFLSHCERIKATNGKDRVIMHCHATNLIALTYVLENDTAVFTRQLWEGSTECLVVFPDGVGILPWMVPGTDEIGQATAQEMQKHSLVLWPFHGVFGSGSTLDETFGLIDTAEKSAQVLVKVYSMGGMKQTISREELIALGKRFGVTPLASALAL.

The active site involves glutamate 117. Zn(2+) contacts are provided by histidine 141, histidine 143, and histidine 212.

The protein belongs to the aldolase class II family. RhaD subfamily. Homotetramer. Zn(2+) is required as a cofactor.

It is found in the cytoplasm. The enzyme catalyses L-rhamnulose 1-phosphate = (S)-lactaldehyde + dihydroxyacetone phosphate. Its pathway is carbohydrate degradation; L-rhamnose degradation; glycerone phosphate from L-rhamnose: step 3/3. Functionally, catalyzes the reversible cleavage of L-rhamnulose-1-phosphate to dihydroxyacetone phosphate (DHAP) and L-lactaldehyde. The polypeptide is Rhamnulose-1-phosphate aldolase (Shigella boydii serotype 4 (strain Sb227)).